The primary structure comprises 428 residues: Serine--tRNA ligase (428 aa).

231–233 is a binding site for L-serine; that stretch reads TAE. Position 262–264 (262–264) interacts with ATP; the sequence is RSE. An L-serine-binding site is contributed by Glu-285. 349-352 serves as a coordination point for ATP; that stretch reads EISS. Ser-385 lines the L-serine pocket.

The protein belongs to the class-II aminoacyl-tRNA synthetase family. Type-1 seryl-tRNA synthetase subfamily. Homodimer. The tRNA molecule binds across the dimer.

The protein localises to the cytoplasm. The catalysed reaction is tRNA(Ser) + L-serine + ATP = L-seryl-tRNA(Ser) + AMP + diphosphate + H(+). It carries out the reaction tRNA(Sec) + L-serine + ATP = L-seryl-tRNA(Sec) + AMP + diphosphate + H(+). The protein operates within aminoacyl-tRNA biosynthesis; selenocysteinyl-tRNA(Sec) biosynthesis; L-seryl-tRNA(Sec) from L-serine and tRNA(Sec): step 1/1. In terms of biological role, catalyzes the attachment of serine to tRNA(Ser). Is also able to aminoacylate tRNA(Sec) with serine, to form the misacylated tRNA L-seryl-tRNA(Sec), which will be further converted into selenocysteinyl-tRNA(Sec). This Staphylococcus aureus (strain MRSA252) protein is Serine--tRNA ligase.